The chain runs to 491 residues: Aspartyl/glutamyl-tRNA(Asn/Gln) amidotransferase subunit B (491 aa).

This sequence belongs to the GatB/GatE family. GatB subfamily. Heterotrimer of A, B and C subunits.

The enzyme catalyses L-glutamyl-tRNA(Gln) + L-glutamine + ATP + H2O = L-glutaminyl-tRNA(Gln) + L-glutamate + ADP + phosphate + H(+). It catalyses the reaction L-aspartyl-tRNA(Asn) + L-glutamine + ATP + H2O = L-asparaginyl-tRNA(Asn) + L-glutamate + ADP + phosphate + 2 H(+). Its function is as follows. Allows the formation of correctly charged Asn-tRNA(Asn) or Gln-tRNA(Gln) through the transamidation of misacylated Asp-tRNA(Asn) or Glu-tRNA(Gln) in organisms which lack either or both of asparaginyl-tRNA or glutaminyl-tRNA synthetases. The reaction takes place in the presence of glutamine and ATP through an activated phospho-Asp-tRNA(Asn) or phospho-Glu-tRNA(Gln). In Burkholderia multivorans (strain ATCC 17616 / 249), this protein is Aspartyl/glutamyl-tRNA(Asn/Gln) amidotransferase subunit B.